Reading from the N-terminus, the 952-residue chain is Isoleucine--tRNA ligase (952 aa).

Residues 60-70 (PYANGSLHIGH) carry the 'HIGH' region motif. Glu562 is a binding site for L-isoleucyl-5'-AMP. Residues 603-607 (KMSKS) carry the 'KMSKS' region motif. Lys606 provides a ligand contact to ATP. Residues Cys921, Cys924, Cys941, and Cys944 each coordinate Zn(2+).

It belongs to the class-I aminoacyl-tRNA synthetase family. IleS type 1 subfamily. In terms of assembly, monomer. Zn(2+) serves as cofactor.

The protein localises to the cytoplasm. It carries out the reaction tRNA(Ile) + L-isoleucine + ATP = L-isoleucyl-tRNA(Ile) + AMP + diphosphate. Functionally, catalyzes the attachment of isoleucine to tRNA(Ile). As IleRS can inadvertently accommodate and process structurally similar amino acids such as valine, to avoid such errors it has two additional distinct tRNA(Ile)-dependent editing activities. One activity is designated as 'pretransfer' editing and involves the hydrolysis of activated Val-AMP. The other activity is designated 'posttransfer' editing and involves deacylation of mischarged Val-tRNA(Ile). This is Isoleucine--tRNA ligase from Microcystis aeruginosa (strain NIES-843 / IAM M-2473).